The following is a 143-amino-acid chain: Transmembrane protein 80 (143 aa).

4 helical membrane passes run 21–41 (MLFY…LLMI), 55–75 (LVLD…RLYL), 99–119 (ALLS…DWAL), and 121–141 (ATLL…IAAF).

Its subcellular location is the membrane. The protein localises to the cell projection. It localises to the cilium. The protein is Transmembrane protein 80 of Homo sapiens (Human).